The sequence spans 64 residues: MARKDQISHRGPLSGNNRSHALNATKRKFNLNLQQITLKTASGKKIRLKVSAKTKKILRKWGHV.

Positions 1–23 (MARKDQISHRGPLSGNNRSHALN) are disordered.

Belongs to the bacterial ribosomal protein bL28 family.

In Mesomycoplasma hyopneumoniae (strain 232) (Mycoplasma hyopneumoniae), this protein is Large ribosomal subunit protein bL28.